Here is a 352-residue protein sequence, read N- to C-terminus: Lipopolysaccharide core biosynthesis mannosyltransferase LpcC (352 aa).

The protein belongs to the glycosyltransferase group 1 family. Glycosyltransferase 4 subfamily.

It functions in the pathway bacterial outer membrane biogenesis; LPS core biosynthesis. Its function is as follows. Acts at transfer of mannose group to a 3-deoxy-D-mono octulonic acid (KDO) via an alpha-1,5 linkage. The protein is Lipopolysaccharide core biosynthesis mannosyltransferase LpcC (lpcC) of Rhizobium leguminosarum bv. viciae.